Reading from the N-terminus, the 217-residue chain is MOB kinase activator 3A (217 aa).

Positions 83, 88, 165, and 170 each coordinate Zn(2+).

It belongs to the MOB1/phocein family.

Its function is as follows. May regulate the activity of kinases. This is MOB kinase activator 3A (MOB3A) from Bos taurus (Bovine).